We begin with the raw amino-acid sequence, 127 residues long: Large ribosomal subunit protein mL55 (127 aa).

Residues 1–32 (MPLAILLSLLRHCGVRAALPTPRHLHTSPWRA) constitute a mitochondrion transit peptide. At Ser84 the chain carries Phosphoserine.

Belongs to the mitochondrion-specific ribosomal protein mL55 family. Component of the mitochondrial ribosome large subunit (39S) which comprises a 16S rRNA and about 50 distinct proteins.

Its subcellular location is the mitochondrion. The protein is Large ribosomal subunit protein mL55 (Mrpl55) of Mus musculus (Mouse).